The following is a 125-amino-acid chain: Small ribosomal subunit protein uS12 (125 aa).

D89 carries the 3-methylthioaspartic acid modification. Residues G100–A125 form a disordered region. Over residues S113–A125 the composition is skewed to basic residues.

The protein belongs to the universal ribosomal protein uS12 family. Part of the 30S ribosomal subunit. Contacts proteins S8 and S17. May interact with IF1 in the 30S initiation complex.

With S4 and S5 plays an important role in translational accuracy. Functionally, interacts with and stabilizes bases of the 16S rRNA that are involved in tRNA selection in the A site and with the mRNA backbone. Located at the interface of the 30S and 50S subunits, it traverses the body of the 30S subunit contacting proteins on the other side and probably holding the rRNA structure together. The combined cluster of proteins S8, S12 and S17 appears to hold together the shoulder and platform of the 30S subunit. The chain is Small ribosomal subunit protein uS12 from Dechloromonas aromatica (strain RCB).